We begin with the raw amino-acid sequence, 160 residues long: 6,7-dimethyl-8-ribityllumazine synthase (160 aa).

5-amino-6-(D-ribitylamino)uracil contacts are provided by residues Phe22, 57–59 (TYE), and 81–83 (TII). 86–87 (QT) is a (2S)-2-hydroxy-3-oxobutyl phosphate binding site. His89 serves as the catalytic Proton donor. Leu114 is a 5-amino-6-(D-ribitylamino)uracil binding site. Residue Arg128 participates in (2S)-2-hydroxy-3-oxobutyl phosphate binding.

Belongs to the DMRL synthase family. As to quaternary structure, forms an icosahedral capsid composed of 60 subunits, arranged as a dodecamer of pentamers.

It catalyses the reaction (2S)-2-hydroxy-3-oxobutyl phosphate + 5-amino-6-(D-ribitylamino)uracil = 6,7-dimethyl-8-(1-D-ribityl)lumazine + phosphate + 2 H2O + H(+). The protein operates within cofactor biosynthesis; riboflavin biosynthesis; riboflavin from 2-hydroxy-3-oxobutyl phosphate and 5-amino-6-(D-ribitylamino)uracil: step 1/2. In terms of biological role, catalyzes the formation of 6,7-dimethyl-8-ribityllumazine by condensation of 5-amino-6-(D-ribitylamino)uracil with 3,4-dihydroxy-2-butanone 4-phosphate. This is the penultimate step in the biosynthesis of riboflavin. The protein is 6,7-dimethyl-8-ribityllumazine synthase of Buchnera aphidicola subsp. Acyrthosiphon pisum (strain Tuc7).